The primary structure comprises 179 residues: Adenine phosphoribosyltransferase (179 aa).

The protein belongs to the purine/pyrimidine phosphoribosyltransferase family. Homodimer.

The protein localises to the cytoplasm. The catalysed reaction is AMP + diphosphate = 5-phospho-alpha-D-ribose 1-diphosphate + adenine. It functions in the pathway purine metabolism; AMP biosynthesis via salvage pathway; AMP from adenine: step 1/1. Its function is as follows. Catalyzes a salvage reaction resulting in the formation of AMP, that is energically less costly than de novo synthesis. This Nitrobacter winogradskyi (strain ATCC 25391 / DSM 10237 / CIP 104748 / NCIMB 11846 / Nb-255) protein is Adenine phosphoribosyltransferase.